Reading from the N-terminus, the 180-residue chain is Ribosome maturation factor RimM (180 aa).

The region spanning 104–177 is the PRC barrel domain; sequence EGEFHLLDLV…WLLLTPPPGL (74 aa).

Belongs to the RimM family. As to quaternary structure, binds ribosomal protein uS19.

It localises to the cytoplasm. Its function is as follows. An accessory protein needed during the final step in the assembly of 30S ribosomal subunit, possibly for assembly of the head region. Essential for efficient processing of 16S rRNA. May be needed both before and after RbfA during the maturation of 16S rRNA. It has affinity for free ribosomal 30S subunits but not for 70S ribosomes. This Synechococcus sp. (strain CC9902) protein is Ribosome maturation factor RimM.